The following is a 786-amino-acid chain: Signal transducer and activator of transcription 5B (786 aa).

A Phosphotyrosine modification is found at Tyr-90. Ser-128 is subject to Phosphoserine. The region spanning 589–686 is the SH2 domain; it reads WNDGAILGFV…EVYSKYYTPV (98 aa). Phosphotyrosine occurs at positions 682 and 699.

The protein belongs to the transcription factor STAT family. As to quaternary structure, upon activation, forms a homodimer or a heterodimer with a related family member. Binds NR3C1. Interacts with NCOA1. Interacts with NMI. Interacts with SOCS7. Interacts (via SH2 domain) with INSR. Interacts with CPEB3; this inhibits STAT5B-mediated transcriptional activation. Tyrosine phosphorylated in response to signaling via activated KIT, resulting in translocation to the nucleus. Tyrosine phosphorylated in response to signaling via activated FLT3; wild-type FLT3 results in much weaker phosphorylation than constitutively activated mutant FLT3. Alternatively, can be phosphorylated by JAK2. Phosphorylation at Tyr-699 by PTK6 or HCK leads to an increase of its transcriptional activity.

The protein localises to the cytoplasm. It localises to the nucleus. Its function is as follows. Carries out a dual function: signal transduction and activation of transcription. Mediates cellular responses to the cytokine KITLG/SCF and other growth factors. Binds to the GAS element and activates PRL-induced transcription. Positively regulates hematopoietic/erythroid differentiation. This chain is Signal transducer and activator of transcription 5B (Stat5b), found in Rattus norvegicus (Rat).